Here is a 178-residue protein sequence, read N- to C-terminus: Translation initiation factor IF-3 (178 aa).

The protein belongs to the IF-3 family. As to quaternary structure, monomer.

It is found in the cytoplasm. Functionally, IF-3 binds to the 30S ribosomal subunit and shifts the equilibrium between 70S ribosomes and their 50S and 30S subunits in favor of the free subunits, thus enhancing the availability of 30S subunits on which protein synthesis initiation begins. The protein is Translation initiation factor IF-3 of Ralstonia nicotianae (strain ATCC BAA-1114 / GMI1000) (Ralstonia solanacearum).